Reading from the N-terminus, the 361-residue chain is 45 kDa calcium-binding protein (361 aa).

Residues 1–35 (MVWLVAMTPRQSSLCGLAAHGLWFLGLVLLMDATA) form the signal peptide. Asn-39 carries N-linked (GlcNAc...) asparagine glycosylation. 2 EF-hand domains span residues 97–132 (RSRRKLMVIFSKVDVNTDRRISAKEMQHWIMEKTAE) and 136–171 (EAVKENKLHFRAVDPDGDGHVSWDEYKVKFLASKGH). Phosphoserine is present on Ser-98. 10 residues coordinate Ca(2+): Asp-110, Asn-112, Asp-114, Arg-116, Glu-121, Asp-149, Asp-151, Asp-153, His-155, and Glu-160. Thr-192 bears the Phosphothreonine mark. EF-hand domains follow at residues 196–231 (LGNLRDRWYQADNPPADLLLTEDEFLSFLHPEHSRG), 232–267 (MLKFMVKEIFRDLDQDGDKQLSLPEFISLPVGTVEN), 277–312 (WVKDRKKEFEELIDSNHDGIVTMEELENYMDPMNEY), and 313–348 (NALNEAKQMIAIADENQNHHLEPEEILKYSEFFTGS). Asp-212 contributes to the Ca(2+) binding site. Thr-216 carries the post-translational modification Phosphothreonine. Residues Glu-219, Asp-245, Asp-247, Asp-249, Gln-251, and Glu-256 each contribute to the Ca(2+) site. Position 264 is a phosphothreonine (Thr-264). Residues Asp-290, Asn-292, and Asp-294 each coordinate Ca(2+). Thr-298 is subject to Phosphothreonine. Residues Glu-301, Asp-326, Asn-328, Asn-330, His-332, and Glu-337 each contribute to the Ca(2+) site. The tract at residues 308–361 (PMNEYNALNEAKQMIAIADENQNHHLEPEEILKYSEFFTGSKLMDYARNVHEEF) is necessary for intracellular retention in Golgi apparatus lumen.

It belongs to the CREC family. Ubiquitous.

The protein resides in the golgi apparatus lumen. Functionally, may regulate calcium-dependent activities in the endoplasmic reticulum lumen or post-ER compartment. In Mus musculus (Mouse), this protein is 45 kDa calcium-binding protein (Sdf4).